The following is a 1408-amino-acid chain: Palladin (1408 aa).

Residues 69 to 229 (SKSPISLCET…SASQSPTADQ (161 aa)) form a disordered region. Polar residues-rich tracts occupy residues 149-169 (PNPS…QSQL) and 193-229 (RSPN…TADQ). Residue Ser-194 is modified to Phosphoserine. Ig-like C2-type domains follow at residues 278–367 (PRFI…AEVF) and 448–546 (PVFT…LVIT). 2 cysteine pairs are disulfide-bonded: Cys-299-Cys-351 and Cys-469-Cys-528. Residues 569 to 573 (FPPPP) are interaction with VASP. Disordered regions lie at residues 631–660 (NGKA…LAKP) and 687–727 (PPGV…VPSE). Position 639 is a phosphoserine (Ser-639). Position 642 is a phosphothreonine (Thr-642). Ser-648 carries the post-translational modification Phosphoserine. Residues 653–683 (PPPLLAKPKLDPLKLQQLQNQVRLEQEACAW) are interaction with LASP1. The interval 683–713 (WPPAPPGVPCNSSSSGSSAPPSPPFPPPPPA) is interaction with SORBS2, SPIN90 and SRC. Low complexity predominate over residues 691–701 (PCNSSSSGSSA). Ser-700, Ser-704, and Ser-744 each carry phosphoserine. Residues 702 to 714 (PPSPPFPPPPPAF) show a composition bias toward pro residues. Disordered regions lie at residues 758–854 (NLGP…RFGP), 882–904 (KGVT…SDEE), and 960–981 (ETAA…LDGQ). Residues 765–779 (LPTPTSSPSSSSLPS) show a composition bias toward low complexity. Pro residues-rich tracts occupy residues 780-797 (PLSP…PPFV), 807-818 (SPSPPPPPPPVF), and 828-840 (DVFP…PPLP). The interaction with EPS8 stretch occupies residues 782-842 (SPTPRPFGRA…PPPPPPLPSS (61 aa)). The tract at residues 807-842 (SPSPPPPPPPVFSPSAAYPVPDVFPLPPPPPPLPSS) is interaction with SORBS2, SPIN90, SRC and PFN1. The interaction with VASP stretch occupies residues 830 to 834 (FPLPP). A Phosphoserine modification is found at Ser-901. Ser-1004 and Ser-1009 each carry phosphoserine. Residues 1026-1110 (PFFEMKLKHY…MAANPQGRVS (85 aa)) enclose the Ig-like C2-type 3 domain. The tract at residues 1121 to 1150 (NQRGRSPRSPSGHPHARRPRSRSRDSGDEN) is disordered. Over residues 1123-1133 (RGRSPRSPSGH) the composition is skewed to low complexity. A phosphoserine mark is found at Ser-1126, Ser-1129, Ser-1131, and Ser-1141. A Phosphoserine; by PKB/AKT1 modification is found at Ser-1143. Ser-1146 bears the Phosphoserine mark. Ig-like C2-type domains are found at residues 1160 to 1251 (PHFL…LVVA) and 1259 to 1349 (PVFM…ARLD). Interaction with EZR stretches follow at residues 1162–1251 (FLQA…LVVA) and 1261–1351 (FMEK…LDVY). A disulfide bridge connects residues Cys-1181 and Cys-1233. Ser-1377 carries the post-translational modification Phosphoserine.

The protein belongs to the myotilin/palladin family. Interacts with EPS8. Interacts with LASP1. Interacts with VASP. Interacts with ACTN. Interacts with SORBS2. Interacts with PFN1. Interacts with LPP. Interacts with SPIN90. Interacts with SRC. Interacts with EZR. Interacts with RAI14. Phosphorylated predominantly on serines and, to a lesser extent, on tyrosines. Phosphorylation at Ser-1143 by PKB/AKT1 modulates cytoskeletal organization and cell motility. In terms of tissue distribution, detected in both muscle and non-muscle tissues and cells (at protein level). Isoform 3 is widely expressed, isoform 4 is particularly abundant in tissues rich in smooth muscle and in the cardiac muscle and isoform 1 is detected in heart.

The protein localises to the cytoplasm. Its subcellular location is the cytoskeleton. It is found in the cell junction. It localises to the focal adhesion. The protein resides in the myofibril. The protein localises to the sarcomere. Its subcellular location is the z line. It is found in the cell projection. It localises to the ruffle. The protein resides in the podosome. The protein localises to the lamellipodium. Its subcellular location is the axon. It is found in the growth cone. Functionally, cytoskeletal protein required for organization of normal actin cytoskeleton. Roles in establishing cell morphology, motility, cell adhesion and cell-extracellular matrix interactions in a variety of cell types. May function as a scaffolding molecule with the potential to influence both actin polymerization and the assembly of existing actin filaments into higher-order arrays. Binds to proteins that bind to either monomeric or filamentous actin. Localizes at sites where active actin remodeling takes place, such as lamellipodia and membrane ruffles. Different isoforms may have functional differences. Involved in the control of morphological and cytoskeletal changes associated with dendritic cell maturation. Involved in targeting ACTN to specific subcellular locations. May be required for the initiation of neural tube closure. This is Palladin (Palld) from Mus musculus (Mouse).